Consider the following 79-residue polypeptide: Protein B6 (79 aa).

This Human herpesvirus 6B (strain Z29) (HHV-6 variant B) protein is Protein B6 (B6).